A 185-amino-acid polypeptide reads, in one-letter code: Ribosome-recycling factor (185 aa).

Belongs to the RRF family.

Its subcellular location is the cytoplasm. Functionally, responsible for the release of ribosomes from messenger RNA at the termination of protein biosynthesis. May increase the efficiency of translation by recycling ribosomes from one round of translation to another. This chain is Ribosome-recycling factor, found in Enterobacter sp. (strain 638).